Reading from the N-terminus, the 236-residue chain is Ubiquinone biosynthesis O-methyltransferase (236 aa).

Residues arginine 36, glycine 60, aspartate 81, and leucine 123 each coordinate S-adenosyl-L-methionine.

Belongs to the methyltransferase superfamily. UbiG/COQ3 family.

The catalysed reaction is a 3-demethylubiquinol + S-adenosyl-L-methionine = a ubiquinol + S-adenosyl-L-homocysteine + H(+). It carries out the reaction a 3-(all-trans-polyprenyl)benzene-1,2-diol + S-adenosyl-L-methionine = a 2-methoxy-6-(all-trans-polyprenyl)phenol + S-adenosyl-L-homocysteine + H(+). It participates in cofactor biosynthesis; ubiquinone biosynthesis. In terms of biological role, O-methyltransferase that catalyzes the 2 O-methylation steps in the ubiquinone biosynthetic pathway. This is Ubiquinone biosynthesis O-methyltransferase from Rickettsia canadensis (strain McKiel).